A 233-amino-acid chain; its full sequence is Choline-phosphate cytidylyltransferase (233 aa).

Positions 6, 8, 9, 80, 85, and 101 each coordinate CDP-choline. Residue Asp-102 participates in Mg(2+) binding. Tyr-187 contacts CDP-choline. Residues Glu-213 and Asp-215 each coordinate Mg(2+).

Belongs to the LicC/PntC cytidylyltransferase family. Requires Mg(2+) as cofactor.

It catalyses the reaction phosphocholine + CTP + H(+) = CDP-choline + diphosphate. The protein operates within lipopolysaccharide biosynthesis. Cytidylyltransferase involved in the biosynthesis of lipopolysaccharides (LPS), a necessary component and antigenic determinant of the outer membrane that has been shown to be an important factor in the host-parasite interaction in a number of Gram-negative species. Catalyzes the activation of phosphocholine (P-Cho) to CDP-choline (CDP-Cho). LicC is critical for the expression of the 6A2-specific epitope. The chain is Choline-phosphate cytidylyltransferase from Haemophilus influenzae (strain ATCC 51907 / DSM 11121 / KW20 / Rd).